Reading from the N-terminus, the 695-residue chain is Centrosomal protein kizuna (695 aa).

A compositionally biased stretch (gly residues) spans M1–L12. Residues M1–S24 form a disordered region. The span at A15 to S24 shows a compositional bias: low complexity. Coiled-coil stretches lie at residues E29 to K57 and V102 to D132. 4 disordered regions span residues E261–E313, H351–T391, Q444–P465, and S633–T695. Polar residues-rich tracts occupy residues G263–S274 and L282–T297. 2 stretches are compositionally biased toward basic and acidic residues: residues L299–E313 and D360–E377. Low complexity predominate over residues G382–T391. The residue at position 391 (T391) is a Phosphothreonine; by PLK1. Residues D448–P465 are compositionally biased toward basic and acidic residues. Residues S633–L645 are compositionally biased toward low complexity. Phosphoserine occurs at positions 667, 670, and 672. A compositionally biased stretch (basic and acidic residues) spans A676 to P686.

The protein belongs to the kizuna family. As to quaternary structure, interacts with AKAP9, CEP72, ODF2, PCNT and TUBGCP2. In terms of processing, phosphorylation at Thr-391 by PLK1 is not needed for centrosomal localization or pericentriolar material expansion but is indispensable for spindle-pole stabilization.

It is found in the cytoplasm. Its subcellular location is the cytoskeleton. It localises to the microtubule organizing center. The protein resides in the centrosome. The protein localises to the cilium basal body. Functionally, centrosomal protein required for establishing a robust mitotic centrosome architecture that can endure the forces that converge on the centrosomes during spindle formation. Required for stabilizing the expanded pericentriolar material around the centriole. The protein is Centrosomal protein kizuna (Kiz) of Mus musculus (Mouse).